Consider the following 153-residue polypeptide: Ribosomal RNA large subunit methyltransferase H (153 aa).

S-adenosyl-L-methionine contacts are provided by residues L71, G102, and 121 to 126 (LSRMTL).

It belongs to the RNA methyltransferase RlmH family. In terms of assembly, homodimer.

The protein resides in the cytoplasm. It carries out the reaction pseudouridine(1915) in 23S rRNA + S-adenosyl-L-methionine = N(3)-methylpseudouridine(1915) in 23S rRNA + S-adenosyl-L-homocysteine + H(+). Functionally, specifically methylates the pseudouridine at position 1915 (m3Psi1915) in 23S rRNA. This is Ribosomal RNA large subunit methyltransferase H from Anaeromyxobacter sp. (strain Fw109-5).